The chain runs to 1004 residues: Glutamate [NMDA] receptor subunit 1 (1004 aa).

A signal peptide spans 1–39 (MAGTDSPAAARFVYRCLLFAPAIVVGLLLPLTLPPIAAA). Residues 40 to 585 (QRHTASDNPS…TLVSFLQPFS (546 aa)) lie on the Extracellular side of the membrane. Residues Asn270, Asn326, Asn357, Asn409, Asn466, Asn493, and Asn513 are each glycosylated (N-linked (GlcNAc...) asparagine). Residues 542–544 (PLT) and Arg549 contribute to the glycine site. The chain crosses the membrane as a helical span at residues 586 to 606 (NTLWILVMVSVHVVALVLYLL). Residues 607 to 663 (DRFSPFGRFKLSHSDSNEEKALNLSSAVWFAWGVLLNSGIGEGTPRSFSARVLGMVW) are Cytoplasmic-facing. The helical transmembrane segment at 664-684 (AGFAMIIVASYTANLAAFLVL) threads the bilayer. At 685 to 843 (ERPKTKLSGI…KTPNTLGLKN (159 aa)) the chain is on the extracellular side. An N-linked (GlcNAc...) asparagine glycan is attached at Asn705. The glycine site is built by Ser715 and Asp759. A helical membrane pass occupies residues 844 to 864 (MAGVFILVGVGIAGGVGLIII). At 865 to 1004 (EVIYKKHQVK…YTSDVSHLVV (140 aa)) the chain is on the cytoplasmic side. A disordered region spans residues 980–1004 (TRPQQNILPPRYSPGYTSDVSHLVV). A compositionally biased stretch (polar residues) spans 994-1004 (GYTSDVSHLVV).

The protein belongs to the glutamate-gated ion channel (TC 1.A.10.1) family. In terms of assembly, forms a heteromeric NMDA channel with Nmdar2.

It localises to the cell membrane. The protein localises to the postsynaptic cell membrane. Its subcellular location is the postsynaptic density. Functionally, NMDA receptor subtype of glutamate-gated ion channels with high calcium permeability and voltage-dependent sensitivity to magnesium. Mediated by glycine. This protein plays a key role in synaptic plasticity, synaptogenesis, excitotoxicity, memory acquisition and learning. It mediates neuronal functions in glutamate neurotransmission. Is involved in the cell surface targeting of NMDA receptors. Plays a role in associative learning and in long-term memory consolidation. The sequence is that of Glutamate [NMDA] receptor subunit 1 from Drosophila persimilis (Fruit fly).